A 327-amino-acid chain; its full sequence is Metaxin-1 homolog (327 aa).

The chain crosses the membrane as a helical span at residues 281–301 (IVAGVGAVLAMGAFAAWRGIY).

The protein belongs to the metaxin family. As to quaternary structure, associates with the mitochondrial contact site and cristae organizing system (MICOS) complex (also known as MINOS or MitOS complex).

Its subcellular location is the mitochondrion outer membrane. In terms of biological role, involved in transport of proteins into the mitochondrion. Essential for embryonic development. The polypeptide is Metaxin-1 homolog (Drosophila melanogaster (Fruit fly)).